The sequence spans 385 residues: Elongation factor Ts, mitochondrial (385 aa).

Residues 1 to 50 constitute a mitochondrion transit peptide; the sequence is MAWSQSARKPMIGLLFRAQQHGARGYSYSAFQAHLSSSNVDQSATLLRRF.

Belongs to the EF-Ts family.

It is found in the mitochondrion. Functionally, associates with the EF-Tu.GDP complex and induces the exchange of GDP to GTP. It remains bound to the aminoacyl-tRNA.EF-Tu.GTP complex up to the GTP hydrolysis stage on the ribosome. The chain is Elongation factor Ts, mitochondrial from Oryza sativa subsp. indica (Rice).